Here is a 432-residue protein sequence, read N- to C-terminus: Tyrosine-protein phosphatase non-receptor type 1 (432 aa).

Position 1 is an N-acetylmethionine (M1). The Tyrosine-protein phosphatase domain maps to 3–277; the sequence is MEKEFEQIDK…RFSYLAVIEG (275 aa). Residue Y20 is modified to Phosphotyrosine. The residue at position 50 (S50) is a Phosphoserine; by PKB/AKT1, CLK1 and CLK2. Residue Y66 is modified to Phosphotyrosine; by EGFR. Substrate-binding positions include D181 and 215 to 221; that span reads CSAGIGR. The active-site Phosphocysteine intermediate is C215. C215 is modified (cysteine persulfide). The residue at position 215 (C215) is an S-nitrosocysteine; in reversibly inhibited form. S242 and S243 each carry phosphoserine; by CLK1 and CLK2. Q262 lines the substrate pocket. The interval 297-322 is disordered; the sequence is EDLEPPPEHVPPPPRPPKRTLEPHNG. Phosphoserine is present on residues S335, S362, and S364. The segment at 350–402 is disordered; sequence SRAPSIAVHSMSSMSQDTEVRKRMVGGGLQSAQASVPTEEELSPTEEEQKAHR. The residue at position 367 (T367) is a Phosphothreonine.

Belongs to the protein-tyrosine phosphatase family. Non-receptor class 1 subfamily. In terms of assembly, interacts with EPHA3 (phosphorylated); dephosphorylates EPHA3 and may regulate its trafficking and function. Interacts with MET. Interacts with NCK1. In terms of processing, ser-50 is the major site of phosphorylation as compared to Ser-242 and Ser-243. Activated by phosphorylation at Ser-50. S-nitrosylation of Cys-215 inactivates the enzyme activity. Post-translationally, sulfhydration at Cys-215 following endoplasmic reticulum stress inactivates the enzyme activity, promoting EIF2AK3/PERK activity. In terms of tissue distribution, found in several tissues including central nervous system, liver and kidney. A high level of expression was found in the hippocampus.

The protein localises to the endoplasmic reticulum membrane. The enzyme catalyses O-phospho-L-tyrosyl-[protein] + H2O = L-tyrosyl-[protein] + phosphate. In terms of biological role, tyrosine-protein phosphatase which acts as a regulator of endoplasmic reticulum unfolded protein response. Mediates dephosphorylation of EIF2AK3/PERK; inactivating the protein kinase activity of EIF2AK3/PERK. May play an important role in CKII- and p60c-src-induced signal transduction cascades. May regulate the EFNA5-EPHA3 signaling pathway which modulates cell reorganization and cell-cell repulsion. May also regulate the hepatocyte growth factor receptor signaling pathway through dephosphorylation of MET. This is Tyrosine-protein phosphatase non-receptor type 1 (Ptpn1) from Rattus norvegicus (Rat).